Consider the following 117-residue polypeptide: cAMP-regulated phosphoprotein 19-B (117 aa).

The segment covering 1–37 (MSRDNQEIKAPEESSAEEQKEMDDKVTSPEKAEEIKL) has biased composition (basic and acidic residues). A disordered region spans residues 1-54 (MSRDNQEIKAPEESSAEEQKEMDDKVTSPEKAEEIKLKSRYPNIGPKPGGSDFL). Residue Ser-28 is modified to Phosphoserine; by CDK2. Phosphoserine; by GWL is present on Ser-67. The interval 77 to 117 (MKNKQLPTAAPDKTEVTGDHIPTPQDLPQRKPSLVASKLAG) is disordered. Position 99 is a phosphothreonine; by CDK2 (Thr-99). The residue at position 109 (Ser-109) is a Phosphoserine; by PKA.

This sequence belongs to the endosulfine family. As to quaternary structure, interacts (when phosphorylated at Ser-67) with ppp2r2d. Phosphorylation at Ser-67 by gwl during mitosis is essential for interaction with ppp2r2d (PR55-delta) and subsequent inactivation of PP2A.

It is found in the cytoplasm. In terms of biological role, protein phosphatase inhibitor that specifically inhibits protein phosphatase 2A (PP2A) during mitosis. When phosphorylated at Ser-67 during mitosis, specifically interacts with ppp2r2d (PR55-delta) and inhibits its activity, leading to inactivation of PP2A, an essential condition to keep cyclin-B1-CDK1 activity high during M phase. This Xenopus laevis (African clawed frog) protein is cAMP-regulated phosphoprotein 19-B (arpp19-b).